The chain runs to 309 residues: Methionyl-tRNA formyltransferase (309 aa).

Position 109-112 (serine 109–proline 112) interacts with (6S)-5,6,7,8-tetrahydrofolate.

It belongs to the Fmt family.

It carries out the reaction L-methionyl-tRNA(fMet) + (6R)-10-formyltetrahydrofolate = N-formyl-L-methionyl-tRNA(fMet) + (6S)-5,6,7,8-tetrahydrofolate + H(+). In terms of biological role, attaches a formyl group to the free amino group of methionyl-tRNA(fMet). The formyl group appears to play a dual role in the initiator identity of N-formylmethionyl-tRNA by promoting its recognition by IF2 and preventing the misappropriation of this tRNA by the elongation apparatus. This Thiobacillus denitrificans (strain ATCC 25259 / T1) protein is Methionyl-tRNA formyltransferase.